Here is a 362-residue protein sequence, read N- to C-terminus: 2-oxoglutarate-dependent dioxygenase lolO1 (362 aa).

The region spanning 199-312 (TWNYFLGQPV…RYSLVFFGHL (114 aa)) is the Fe2OG dioxygenase domain. Fe cation-binding residues include His-222, Asp-224, and His-280. Position 303 (Arg-303) interacts with 2-oxoglutarate.

Belongs to the iron/ascorbate-dependent oxidoreductase family. Fe(2+) serves as cofactor.

Its pathway is alkaloid biosynthesis. Its function is as follows. 2-oxoglutarate-dependent dioxygenase; part of the gene cluster that mediates the biosynthesis of loline alkaloids, potent insecticidal agents composed of a pyrrolizidine ring system and an uncommon ether bridge linking carbons 2 and 7. Lolines are structurally differentiated by the various modifications of the L-amino group and include norloline, loline, N-methylloline, N-acetylloline, N-acetylnorloline, and N-formylloline. The first committed step is the condensation of O-acetyl-L-homoserine (derived from L-aspartic acid) and L-proline, probably catalyzed by the gamma-type pyridoxal 5'-phosphate(PLP)-dependent enzyme lolC, to give the diamino diacid, NACPP. Ensuing cyclization, decarboxylation, and acetylation steps yield 1-exo-acetamidopyrrolizidine (AcAP). LolO is required for installation of the ether bridge upon the pathway intermediate, 1-exo-acetamidopyrrolizidine (AcAP). In sequential 2-oxoglutarate- and O(2)-consuming steps, lolO removes hydrogens from C2 and C7 of AcAP to form both carbon-oxygen bonds in N-acetylnorloline (NANL), the precursor to all other lolines. The enzymes lolD, lolE, lolF and lolT have also been proposed to be involved in the ether-bridge installation. Further processing of the exocyclic moiety of NANL by fungal N-acetamidase (LolN), methyltransferase (LolM), and cytochrome P450 (LolP) enzymes, with occasional involvement of a plant acetyltransferase, generates the other known lolines. LolN transforms NANL to norlonine which is monomethylated and dimethylated to respectively lonine and N-methyllonine (NML) by lolM. LolP catalyzes hydroxylation of the methyl group in N-methylloline (NML) and further oxygenation to N-formylloline (NFL). A plant acetyltransferase is responsible for the acetylation of loline to form N-acetylloline (NAL). LolA might interact with aspartate kinase to prevent feedback inhibition of its activity by these end products and thereby promote production of l-homoserine from l-aspartate. In Epichloe uncinata (Endophyte fungus), this protein is 2-oxoglutarate-dependent dioxygenase lolO1.